A 1232-amino-acid polypeptide reads, in one-letter code: Pyruvate:ferredoxin oxidoreductase (1232 aa).

Thr31 is a pyruvate binding site. Glu64 is a thiamine diphosphate binding site. Arg114 serves as a coordination point for pyruvate. Residues 427 to 431, Lys459, Asn560, and Asn602 each bind CoA; that span reads ADGTV. 2 consecutive 4Fe-4S ferredoxin-type domains span residues 680-709 and 736-767; these read NVPQ…PVLA and FRIQ…MQPL. [4Fe-4S] cluster contacts are provided by Cys689, Cys692, Cys695, Cys699, Cys745, Cys748, Cys751, Cys755, Cys812, and Cys815. Residues Glu817, Cys840, and 962–965 each bind thiamine diphosphate; that span reads GDGW. Cys840 lines the [4Fe-4S] cluster pocket. Asp963 lines the Mg(2+) pocket. Residues Asp983 and Asn985 each coordinate Ca(2+). Mg(2+)-binding residues include Thr991 and Val993. 991–996 lines the thiamine diphosphate pocket; that stretch reads TEVYSN. Ca(2+) contacts are provided by Ala1056, Phe1059, Gly1061, and Ser1063. Cys1071 contacts [4Fe-4S] cluster. Cysteines 1195 and 1212 form a disulfide. Positions 1197–1232 are disordered; that stretch reads RDDTPMMARPDSGEACDQNRAGTSEQQGDLSKRTKK. The span at 1216 to 1225 shows a compositional bias: polar residues; the sequence is RAGTSEQQGD.

This sequence belongs to the pyruvate:ferredoxin/flavodoxin oxidoreductase family. In terms of assembly, homodimer. [4Fe-4S] cluster serves as cofactor. Thiamine diphosphate is required as a cofactor. Requires Mg(2+) as cofactor.

Its subcellular location is the cytoplasm. The catalysed reaction is 2 oxidized [2Fe-2S]-[ferredoxin] + pyruvate + CoA = 2 reduced [2Fe-2S]-[ferredoxin] + acetyl-CoA + CO2 + H(+). Catalyzes the ferredoxin-dependent oxidative decarboxylation of pyruvate. Required for the transfer of electrons from pyruvate to ferredoxin. Ferredoxin I and ferredoxin II, which are single 4Fe-4S cluster ferredoxins are the most effective electron carriers of POR. This chain is Pyruvate:ferredoxin oxidoreductase, found in Desulfocurvibacter africanus (Desulfovibrio africanus).